The chain runs to 539 residues: Acid-sensing ion channel 4 (539 aa).

Over 1-68 (MPIEIVCKIK…GPGPHGLRRT (68 aa)) the chain is Cytoplasmic. The helical transmembrane segment at 69–89 (LWALALLTSLAAFLYQAAGLA) threads the bilayer. Residues 90 to 438 (RGYLTRPHLV…EQRAAYGLSA (349 aa)) are Extracellular-facing. 2 cysteine pairs are disulfide-bonded: Cys-118/Cys-202 and Cys-180/Cys-187. N-linked (GlcNAc...) asparagine glycans are attached at residues Asn-191 and Asn-243. Intrachain disulfides connect Cys-296–Cys-375, Cys-318–Cys-371, Cys-322–Cys-369, Cys-331–Cys-353, and Cys-333–Cys-345. Residue Asn-376 is glycosylated (N-linked (GlcNAc...) asparagine). The helical transmembrane segment at 439–459 (LLGDLGGQMGLFIGASILTLL) threads the bilayer. Residues 452–454 (GAS) carry the GAS motif; ion selectivity filter motif. The Cytoplasmic segment spans residues 460–539 (EILDYIYEVS…PGGLFEDFAC (80 aa)). Residues 501 to 531 (EQSPCPSRGRVEGGGVSSLLPNHHHPHGPPG) are disordered.

Belongs to the amiloride-sensitive sodium channel (TC 1.A.6) family. ASIC4 subfamily. Homotrimer. Heterotrimer; with other ASIC proteins producing functional channels. As to expression, expressed in pituitary gland. Weakly expressed in brain, vestibular system and organ of Corti.

The protein localises to the cell membrane. Does not exhibit measurable stand-alone pH-gated sodium channel activity but may form pH-gated heterotrimeric sodium channels. Its activity could also depend on alternative gating mechanisms. The chain is Acid-sensing ion channel 4 from Homo sapiens (Human).